The sequence spans 27 residues: C-reactive protein P1 (27 aa).

Positions 1-27 (IPQDLSGKMLTFPKEEDDDDVKLMTPK) are disordered. Residues 6 to 27 (SGKMLTFPKEEDDDDVKLMTPK) enclose the Pentraxin (PTX) domain.

This sequence belongs to the pentraxin family. Homopentamer. Pentraxin (or pentaxin) have a discoid arrangement of 5 non-covalently bound subunits. Exists as a dimer under reducing conditions. Requires Ca(2+) as cofactor. Glycosylated.

The protein localises to the secreted. In terms of biological role, displays several functions associated with host defense: it promotes agglutination, bacterial capsular swelling, phagocytosis, and complement fixation through its calcium-dependent binding to phosphorylcholine. The polypeptide is C-reactive protein P1 (Gadus morhua (Atlantic cod)).